The primary structure comprises 81 residues: MKAPATIVILIMSLISVLWATADTEDGNLLFPIEDFIRKFDEYPVQPKERSCKLTFWRCKKDKECCGWNICTGLCIPPGKK.

A signal peptide spans 1–24 (MKAPATIVILIMSLISVLWATADT). The propeptide occupies 25 to 50 (EDGNLLFPIEDFIRKFDEYPVQPKER). Cystine bridges form between C52-C66, C59-C71, and C65-C75. At P78 the chain carries Proline amide.

As to expression, expressed by the venom gland.

The protein localises to the secreted. In terms of biological role, blocks voltage-gated sodium channels (Nav). Intracranial injection into mice causes lacrimation, slow breathing and death. Intrathorax injection into crickets causes death. In Macrothele gigas (Japanese funnel web spider), this protein is U12-hexatoxin-Mg1a.